The primary structure comprises 278 residues: Bis(5'-nucleosyl)-tetraphosphatase, symmetrical (278 aa).

The protein belongs to the Ap4A hydrolase family.

The enzyme catalyses P(1),P(4)-bis(5'-adenosyl) tetraphosphate + H2O = 2 ADP + 2 H(+). Functionally, hydrolyzes diadenosine 5',5'''-P1,P4-tetraphosphate to yield ADP. This Nitrosococcus oceani (strain ATCC 19707 / BCRC 17464 / JCM 30415 / NCIMB 11848 / C-107) protein is Bis(5'-nucleosyl)-tetraphosphatase, symmetrical.